A 278-amino-acid polypeptide reads, in one-letter code: 4-hydroxy-3-methylbut-2-enyl diphosphate reductase (278 aa).

Cysteine 12 contributes to the [4Fe-4S] cluster binding site. Positions 41 and 74 each coordinate (2E)-4-hydroxy-3-methylbut-2-enyl diphosphate. The dimethylallyl diphosphate site is built by histidine 41 and histidine 74. Isopentenyl diphosphate-binding residues include histidine 41 and histidine 74. [4Fe-4S] cluster is bound at residue cysteine 96. Histidine 124 lines the (2E)-4-hydroxy-3-methylbut-2-enyl diphosphate pocket. Histidine 124 serves as a coordination point for dimethylallyl diphosphate. Histidine 124 is a binding site for isopentenyl diphosphate. Glutamate 126 serves as the catalytic Proton donor. Threonine 161 is a (2E)-4-hydroxy-3-methylbut-2-enyl diphosphate binding site. Cysteine 189 is a [4Fe-4S] cluster binding site. Residues serine 217, asparagine 219, and serine 261 each coordinate (2E)-4-hydroxy-3-methylbut-2-enyl diphosphate. Residues serine 217, asparagine 219, and serine 261 each coordinate dimethylallyl diphosphate. Positions 217, 219, and 261 each coordinate isopentenyl diphosphate.

It belongs to the IspH family. [4Fe-4S] cluster is required as a cofactor.

It carries out the reaction isopentenyl diphosphate + 2 oxidized [2Fe-2S]-[ferredoxin] + H2O = (2E)-4-hydroxy-3-methylbut-2-enyl diphosphate + 2 reduced [2Fe-2S]-[ferredoxin] + 2 H(+). The catalysed reaction is dimethylallyl diphosphate + 2 oxidized [2Fe-2S]-[ferredoxin] + H2O = (2E)-4-hydroxy-3-methylbut-2-enyl diphosphate + 2 reduced [2Fe-2S]-[ferredoxin] + 2 H(+). Its pathway is isoprenoid biosynthesis; dimethylallyl diphosphate biosynthesis; dimethylallyl diphosphate from (2E)-4-hydroxy-3-methylbutenyl diphosphate: step 1/1. It participates in isoprenoid biosynthesis; isopentenyl diphosphate biosynthesis via DXP pathway; isopentenyl diphosphate from 1-deoxy-D-xylulose 5-phosphate: step 6/6. In terms of biological role, catalyzes the conversion of 1-hydroxy-2-methyl-2-(E)-butenyl 4-diphosphate (HMBPP) into a mixture of isopentenyl diphosphate (IPP) and dimethylallyl diphosphate (DMAPP). Acts in the terminal step of the DOXP/MEP pathway for isoprenoid precursor biosynthesis. This is 4-hydroxy-3-methylbut-2-enyl diphosphate reductase from Anaeromyxobacter sp. (strain K).